The following is a 101-amino-acid chain: Large ribosomal subunit protein bL20 (101 aa).

The protein belongs to the bacterial ribosomal protein bL20 family.

Binds directly to 23S ribosomal RNA and is necessary for the in vitro assembly process of the 50S ribosomal subunit. It is not involved in the protein synthesizing functions of that subunit. This Carsonella ruddii (strain PV) protein is Large ribosomal subunit protein bL20 (rplT).